The following is a 424-amino-acid chain: UPF0597 protein Sbal_3070 (424 aa).

The protein belongs to the UPF0597 family.

This chain is UPF0597 protein Sbal_3070, found in Shewanella baltica (strain OS155 / ATCC BAA-1091).